We begin with the raw amino-acid sequence, 389 residues long: D-alanine--D-alanine ligase (389 aa).

A compositionally biased stretch (polar residues) spans 1–12; sequence MSTENLPQNPEQ. The interval 1-22 is disordered; the sequence is MSTENLPQNPEQSPRRPPRKPR. One can recognise an ATP-grasp domain in the interval 169–379; that stretch reads KAVFTSYGLK…YPELVDRLVQ (211 aa). 205–260 is an ATP binding site; it reads AGEHGWPLFVKPARAGSSIGITKVDDLAGLDEAIEEARRHDPKILVEAALRGREIE. Residues aspartate 333, glutamate 346, and asparagine 348 each contribute to the Mg(2+) site.

Belongs to the D-alanine--D-alanine ligase family. It depends on Mg(2+) as a cofactor. Requires Mn(2+) as cofactor.

It localises to the cytoplasm. It catalyses the reaction 2 D-alanine + ATP = D-alanyl-D-alanine + ADP + phosphate + H(+). It participates in cell wall biogenesis; peptidoglycan biosynthesis. Functionally, cell wall formation. This is D-alanine--D-alanine ligase (ddl) from Streptomyces coelicolor (strain ATCC BAA-471 / A3(2) / M145).